We begin with the raw amino-acid sequence, 130 residues long: Small ribosomal subunit protein uS11c (130 aa).

This sequence belongs to the universal ribosomal protein uS11 family. As to quaternary structure, part of the 30S ribosomal subunit.

It is found in the plastid. The protein resides in the cyanelle. This Cyanophora paradoxa protein is Small ribosomal subunit protein uS11c.